The chain runs to 73 residues: uncharacterized protein (73 aa).

The next 2 helical transmembrane spans lie at 4–24 and 51–71; these read LIPV…SPCV and AGAI…IIAL.

It is found in the cell membrane. This is an uncharacterized protein from Escherichia coli O157:H7.